A 111-amino-acid chain; its full sequence is Putative single-stranded DNA-binding protein ycf41 (111 aa).

Residues 1–98 (MNSCTLLVQI…FSTSRIFKYK (98 aa)) enclose the SSB domain.

The protein resides in the plastid. The protein localises to the chloroplast. The polypeptide is Putative single-stranded DNA-binding protein ycf41 (ycf41) (Pyropia yezoensis (Susabi-nori)).